Reading from the N-terminus, the 137-residue chain is Ribosome-binding factor A (137 aa).

The protein belongs to the RbfA family. As to quaternary structure, monomer. Binds 30S ribosomal subunits, but not 50S ribosomal subunits or 70S ribosomes.

The protein resides in the cytoplasm. Its function is as follows. One of several proteins that assist in the late maturation steps of the functional core of the 30S ribosomal subunit. Associates with free 30S ribosomal subunits (but not with 30S subunits that are part of 70S ribosomes or polysomes). Required for efficient processing of 16S rRNA. May interact with the 5'-terminal helix region of 16S rRNA. In Nitrobacter winogradskyi (strain ATCC 25391 / DSM 10237 / CIP 104748 / NCIMB 11846 / Nb-255), this protein is Ribosome-binding factor A.